Consider the following 343-residue polypeptide: Lipopolysaccharide core biosynthesis glycosyltransferase LpsD (343 aa).

The protein belongs to the glycosyltransferase group 1 family. Glycosyltransferase 4 subfamily.

Its pathway is bacterial outer membrane biogenesis; LPS core biosynthesis. This chain is Lipopolysaccharide core biosynthesis glycosyltransferase LpsD (lpsD), found in Rhizobium meliloti (strain 1021) (Ensifer meliloti).